The following is a 306-amino-acid chain: Small ribosomal subunit protein uS2 (306 aa).

Ser-2 carries the post-translational modification N-acetylserine. Laminin-binding stretches follow at residues 161 to 180 (IPCNNKGAHSVGLMWWMLAR) and 205 to 229 (RDPEEIEKEEQAAAEKATTKEEYQG). [DE]-W-[ST] repeat units lie at residues 230-232 (EWT), 245-247 (DWS), 276-278 (DWS), 286-288 (DWS), and 304-306 (EWS). The laminin-binding stretch occupies residues 242-306 (EVADWSEGVQ…EWTGTTTEWS (65 aa)). Residues 261–306 (PAERPEIPAAKPAAEDWSSQPASTDDWSAAPTAQASEWTGTTTEWS) are disordered. Residues 277-306 (WSSQPASTDDWSAAPTAQASEWTGTTTEWS) are compositionally biased toward polar residues.

The protein belongs to the universal ribosomal protein uS2 family. In terms of assembly, monomer (37LRP) and homodimer (67LR). Component of the small ribosomal subunit. Mature ribosomes consist of a small (40S) and a large (60S) subunit. The 40S subunit contains about 33 different proteins and 1 molecule of RNA (18S). The 60S subunit contains about 49 different proteins and 3 molecules of RNA (28S, 5.8S and 5S). Interacts with rps21. Interacts with several laminins including at least lamb1. Interacts with mdk. Post-translationally, acylated. Acylation may be a prerequisite for conversion of the monomeric 37 kDa laminin receptor precursor (37LRP) to the mature dimeric 67 kDa laminin receptor (67LR), and may provide a mechanism for membrane association. In terms of processing, cleaved by stromelysin-3 (ST3) at the cell surface. Cleavage by stromelysin-3 may be a mechanism to alter cell-extracellular matrix interactions.

The protein localises to the cell membrane. It is found in the cytoplasm. It localises to the nucleus. Functionally, required for the assembly and/or stability of the 40S ribosomal subunit. Required for the processing of the 20S rRNA-precursor to mature 18S rRNA in a late step of the maturation of 40S ribosomal subunits. Also functions as a cell surface receptor for laminin. Plays a role in cell adhesion to the basement membrane and in the consequent activation of signaling transduction pathways. May play a role in cell fate determination and tissue morphogenesis. In Xenopus tropicalis (Western clawed frog), this protein is Small ribosomal subunit protein uS2 (rpsa).